A 257-amino-acid polypeptide reads, in one-letter code: Type III pantothenate kinase (257 aa).

Asp-11–Lys-18 provides a ligand contact to ATP. Residues Tyr-96 and Gly-103–Arg-106 contribute to the substrate site. Asp-105 acts as the Proton acceptor in catalysis. Residue Asp-125 participates in K(+) binding. Thr-128 contributes to the ATP binding site. Thr-179 contacts substrate.

It belongs to the type III pantothenate kinase family. In terms of assembly, homodimer. It depends on NH4(+) as a cofactor. K(+) is required as a cofactor.

The protein localises to the cytoplasm. The enzyme catalyses (R)-pantothenate + ATP = (R)-4'-phosphopantothenate + ADP + H(+). It participates in cofactor biosynthesis; coenzyme A biosynthesis; CoA from (R)-pantothenate: step 1/5. Its function is as follows. Catalyzes the phosphorylation of pantothenate (Pan), the first step in CoA biosynthesis. The chain is Type III pantothenate kinase from Nitrosomonas eutropha (strain DSM 101675 / C91 / Nm57).